Reading from the N-terminus, the 506-residue chain is Tyrosine-protein kinase FRK (506 aa).

One can recognise an SH3 domain in the interval 43-111 (SQGQYFVALF…PSNYVAEDRS (69 aa)). The SH2 domain occupies 117–209 (WFFGAIKRAD…GLCVKLEKPC (93 aa)). Position 179 is a phosphothreonine (Thr-179). Residues 235 to 492 (IQLLKRLGSG…TLHWKLEDYF (258 aa)) enclose the Protein kinase domain. Residues 241–249 (LGSGQFGEV) and Lys-263 contribute to the ATP site. Asp-355 serves as the catalytic Proton acceptor. Tyr-388 is subject to Phosphotyrosine; by autocatalysis.

The protein belongs to the protein kinase superfamily. Tyr protein kinase family. SRC subfamily. Interacts (via the SH3-domain) with PTEN. Interacts with RB1. Highly expressed in stomach, small intestine and colon. Concentrated in the brush border membranes of epithelial cells, throughout the maturation axis of the adult small intestine.

It is found in the cytoplasm. The protein resides in the nucleus. The catalysed reaction is L-tyrosyl-[protein] + ATP = O-phospho-L-tyrosyl-[protein] + ADP + H(+). Its function is as follows. Non-receptor tyrosine-protein kinase that negatively regulates cell proliferation. Positively regulates PTEN protein stability through phosphorylation of PTEN on 'Tyr-336', which in turn prevents its ubiquitination and degradation, possibly by reducing its binding to NEDD4. May function as a tumor suppressor. The polypeptide is Tyrosine-protein kinase FRK (Frk) (Rattus norvegicus (Rat)).